We begin with the raw amino-acid sequence, 64 residues long: Neurotoxin lambda-MeuTx (64 aa).

An N-terminal signal peptide occupies residues 1-18 (MSTFIVVFLLLTAILCHA). The propeptide occupies 19-27 (EHAIDETAR). Cystine bridges form between Cys-29-Cys-43, Cys-36-Cys-49, and Cys-42-Cys-58.

It belongs to the scorpion calcin-like family. Expressed by the venom gland.

It localises to the secreted. Functionally, voltage-gated potassium channel (Kv) inhibitor. In addition it may increase intracellular calcium release through the activation of nuclear inositol 1,4,5-trisphosphate receptors (ITPR) of cardiomyocytes, thereby causing an increase in the contraction frequency of these cells. The chain is Neurotoxin lambda-MeuTx from Mesobuthus eupeus (Lesser Asian scorpion).